Here is a 136-residue protein sequence, read N- to C-terminus: Holo-[acyl-carrier-protein] synthase (136 aa).

Mg(2+) contacts are provided by aspartate 8 and glutamate 57.

Belongs to the P-Pant transferase superfamily. AcpS family. Mg(2+) is required as a cofactor.

It localises to the cytoplasm. It catalyses the reaction apo-[ACP] + CoA = holo-[ACP] + adenosine 3',5'-bisphosphate + H(+). In terms of biological role, transfers the 4'-phosphopantetheine moiety from coenzyme A to a Ser of acyl-carrier-protein. In Methylorubrum extorquens (strain CM4 / NCIMB 13688) (Methylobacterium extorquens), this protein is Holo-[acyl-carrier-protein] synthase.